The primary structure comprises 154 residues: Large ribosomal subunit protein uL13 (154 aa).

The segment at 129–154 (SQHPHEAQQPEALDVGTLNRKNKRIA) is disordered.

This sequence belongs to the universal ribosomal protein uL13 family. In terms of assembly, part of the 50S ribosomal subunit.

Functionally, this protein is one of the early assembly proteins of the 50S ribosomal subunit, although it is not seen to bind rRNA by itself. It is important during the early stages of 50S assembly. In Bartonella bacilliformis (strain ATCC 35685 / KC583 / Herrer 020/F12,63), this protein is Large ribosomal subunit protein uL13.